A 367-amino-acid polypeptide reads, in one-letter code: Peptide chain release factor 2 (367 aa).

The residue at position 247 (Gln247) is an N5-methylglutamine.

It belongs to the prokaryotic/mitochondrial release factor family. Post-translationally, methylated by PrmC. Methylation increases the termination efficiency of RF2.

It is found in the cytoplasm. Peptide chain release factor 2 directs the termination of translation in response to the peptide chain termination codons UGA and UAA. The protein is Peptide chain release factor 2 of Caulobacter sp. (strain K31).